The primary structure comprises 247 residues: Dihydroorotate dehydrogenase B (NAD(+)), electron transfer subunit (247 aa).

Residues 2 to 96 form the FAD-binding FR-type domain; that stretch reads RWKMKARVLS…TGPHGNGFEI (95 aa). Residues 49–52, 64–66, and 71–72 each bind FAD; these read RPFS, LYQ, and GT. The [2Fe-2S] cluster site is built by cysteine 210, cysteine 215, cysteine 218, and cysteine 234.

Belongs to the PyrK family. As to quaternary structure, heterotetramer of 2 PyrK and 2 PyrD type B subunits. The cofactor is [2Fe-2S] cluster. FAD is required as a cofactor.

The protein operates within pyrimidine metabolism; UMP biosynthesis via de novo pathway; orotate from (S)-dihydroorotate (NAD(+) route): step 1/1. Functionally, responsible for channeling the electrons from the oxidation of dihydroorotate from the FMN redox center in the PyrD type B subunit to the ultimate electron acceptor NAD(+). This Caldanaerobacter subterraneus subsp. tengcongensis (strain DSM 15242 / JCM 11007 / NBRC 100824 / MB4) (Thermoanaerobacter tengcongensis) protein is Dihydroorotate dehydrogenase B (NAD(+)), electron transfer subunit.